Here is a 389-residue protein sequence, read N- to C-terminus: MGAPTQIPIETSPLAWLDAVERQRRDAGLRRSLRPRPPVGTELDLASNDYLGLSQHPDVIEGGVQALRIWGAGATGSRLVTGDTELHQQLEAELAEYVGAAAGLLFSSGYTANLGAVVGLSGPGSLLVSDAYSHASLVDACRLSRARVVVTPHRDVAAVDAALASRDEQRAMVITDSVFSADGTLAPLRELLAACRRHRALLVIDEAHGLGVRGGGRGLLHELGLAGAPDVVLTTTLSKALGSQGGAVLGPAAVRAHLIDAARPFIFDTGLAPGAVGAARAALGVLKAEQWRPGAVLQNARELADICDVPETPQSAVVSVLLGDPEVALAAAAACLDAGVKVGCFRPPTVPAGTSRLRLTARASLSPDEMELARRVLTDVLLGPAAARR.

Arg-31 contacts substrate. 109–110 (GY) serves as a coordination point for pyridoxal 5'-phosphate. Substrate is bound at residue His-134. Residues Ser-180, 205-208 (DEAH), and 236-239 (TLSK) each bind pyridoxal 5'-phosphate. Lys-239 is modified (N6-(pyridoxal phosphate)lysine). Thr-349 serves as a coordination point for substrate.

The protein belongs to the class-II pyridoxal-phosphate-dependent aminotransferase family. BioF subfamily. As to quaternary structure, homodimer. The cofactor is pyridoxal 5'-phosphate.

It catalyses the reaction 6-carboxyhexanoyl-[ACP] + L-alanine + H(+) = (8S)-8-amino-7-oxononanoate + holo-[ACP] + CO2. It functions in the pathway cofactor biosynthesis; biotin biosynthesis. Its function is as follows. Catalyzes the decarboxylative condensation of pimeloyl-[acyl-carrier protein] and L-alanine to produce 8-amino-7-oxononanoate (AON), [acyl-carrier protein], and carbon dioxide. This is 8-amino-7-oxononanoate synthase from Mycobacterium ulcerans (strain Agy99).